A 1357-amino-acid polypeptide reads, in one-letter code: MAYSYTEKKRIRKDFSKLPDVMDVPYLLAIQLDSYREFLQAGASKDHFRDVGLHAAFKSVFPIISYSGNAALEYVGYRLGEPAFDVKECVLRGVTFAVPLRVKVRLIIFDKESSNKAIKDIKEQEVYMGEIPLMTENGTFVINGTERVIVSQLHRSPGVFFDHDRGKTHSSGKLLYSARIIPYRGSWLDFEFDPKDCVFVRIDRRRKLPASVLLRALGYSTEEVLNTFYTTNVFHISGEKLSLELVPQRLRGEVAVMDIHDETGKVIVEQGRRITARHINQLEKAGVKQLDVPMEYVLGRTTAKAIVHPATGEILAECNTEMTTELLIKVAKAQVVRIETLYTNDIDCGPFISDTLKIDTTSNQLEALVEIYRMMRPGEPPTKDAAETLFNNLFFSAERYDLSAVGRMKFNRRIGRTEIEGSGVLSKEDIVEVLKTLVDIRNGKGIVDDIDHLGNRRVRCVGEMAENQFRVGLVRVERAVKERLSMAESEGLMPQDLINAKPVAAAVKEFFGSSQLSQFMDQNNPLSEITHKRRVSALGPGGLTRERAGFEVRDVHPTHYGRVCPIETPEGPNIGLINSLAAYARTNQYGFLESPYRVVKEGVVSDDIVFLSAIEEADHVIAQASAAMNDKKQLIDELVAVRHLNEFTVKAPEDVTLMDVSPKQVVSVAASLIPFLEHDDANRALMGSNMQRQAVPTLRADKPLVGTGMERNVARDSGVCVVARRGGVIDSVDASRIVVRVADDEVETGEAGVDIYNLTKYTRSNQNTCINQRPLVSKGDKVQRGDIMADGPSTDMGELALGQNMRIAFMAWNGFNFEDSICLSERVVQEDRFTTIHIQELTCVARDTKLGPEEITADIPNVGEAALNKLDEAGIVYVGAEVGAGDILVGKVTPKGETQLTPEEKLLRAIFGEKASDVKDTSLRVPTGTKGTVIDVQVFTRDGVERDSRALAIEKMQLDEIRKDLNEEFRIVEGATFERLRSALNGQVVDGGAGLKKGTVITDEVLDGLEHGQWFKLRMAEDALNEQLEKAQQYIVDRRRLLDDKFEDKKRKLQQGDDLAPGVLKIVKVYLAIRRRIQPGDKMAGRHGNKGVVSVIMPVEDMPHDANGTPVDVVLNPLGVPSRMNVGQILETHLGLAAKGLGEKIDRMLEEQRKAAELRVFLTEVYNEIGGRQENLDEFTDEEILALANNLKKGVPMATPVFDGAKEREIKAMLKLADLPESGQMVLFDGRTGNKFERPVTVGYMYMLKLNHLVDDKMHARSTGSYSLVTQQPLGGKAQFGGQRFGEMEVWALEAYGAAYTLQEMLTVKSDDVNGRTKMYKNIVDGDHRMEPGMPESFNVLIKEIRSLGIDIDLETE.

It belongs to the RNA polymerase beta chain family. As to quaternary structure, the RNAP catalytic core consists of 2 alpha, 1 beta, 1 beta' and 1 omega subunit. When a sigma factor is associated with the core the holoenzyme is formed, which can initiate transcription.

It carries out the reaction RNA(n) + a ribonucleoside 5'-triphosphate = RNA(n+1) + diphosphate. DNA-dependent RNA polymerase catalyzes the transcription of DNA into RNA using the four ribonucleoside triphosphates as substrates. This is DNA-directed RNA polymerase subunit beta from Pseudomonas putida (strain ATCC 700007 / DSM 6899 / JCM 31910 / BCRC 17059 / LMG 24140 / F1).